The following is a 284-amino-acid chain: NAD kinase (284 aa).

The active-site Proton acceptor is the aspartate 60. NAD(+) contacts are provided by residues aspartate 60–glycine 61, asparagine 134–glutamate 135, arginine 145, lysine 162, aspartate 164, threonine 175–serine 180, and glutamine 234.

Belongs to the NAD kinase family. A divalent metal cation serves as cofactor.

Its subcellular location is the cytoplasm. It catalyses the reaction NAD(+) + ATP = ADP + NADP(+) + H(+). Functionally, involved in the regulation of the intracellular balance of NAD and NADP, and is a key enzyme in the biosynthesis of NADP. Catalyzes specifically the phosphorylation on 2'-hydroxyl of the adenosine moiety of NAD to yield NADP. The protein is NAD kinase of Clostridium botulinum (strain Eklund 17B / Type B).